The chain runs to 375 residues: Probable cytochrome c oxidase subunit 2 (375 aa).

3 helical membrane-spanning segments follow: residues 36 to 56 (LAVS…DNVW), 80 to 100 (IIAA…TVVF), and 122 to 142 (LTYT…TVVV). Residues His-264, Cys-305, Cys-309, and His-313 each coordinate Cu cation. The span at 353-363 (VATSTRPFNTD) shows a compositional bias: polar residues. The segment at 353 to 375 (VATSTRPFNTDRTVKSAAAPEAE) is disordered.

The protein belongs to the cytochrome c oxidase subunit 2 family. It depends on Cu cation as a cofactor. Heme serves as cofactor.

Its subcellular location is the cell membrane. The catalysed reaction is 4 Fe(II)-[cytochrome c] + O2 + 8 H(+)(in) = 4 Fe(III)-[cytochrome c] + 2 H2O + 4 H(+)(out). Its function is as follows. Subunits I and II form the functional core of the enzyme complex. Electrons originating in cytochrome c are transferred via heme a and Cu(A) to the binuclear center formed by heme a3 and Cu(B). The sequence is that of Probable cytochrome c oxidase subunit 2 (ctaC) from Nocardia farcinica (strain IFM 10152).